We begin with the raw amino-acid sequence, 257 residues long: Zinc uptake system ATP-binding protein ZurA (257 aa).

The 237-residue stretch at I5 to E241 folds into the ABC transporter domain. Position 37-44 (G37–S44) interacts with ATP.

This sequence belongs to the ABC transporter superfamily.

Involved in a zinc uptake transport system. In Listeria monocytogenes serovar 1/2a (strain ATCC BAA-679 / EGD-e), this protein is Zinc uptake system ATP-binding protein ZurA (zurA).